The chain runs to 662 residues: MAHSSDLALFRHRIAEALPSANVPTLLLLLYQFTGKEYWLTPPFLPVKSVWGDNDSGGLAAELQTEIRNAALDAIICWHSGAPVTKQDLSEEELIRMLTVSEAEPIPPEYADMMLHKLRRYAGAIPDPVSLPKGFRVLIIGAGMSGVAAAIRLRQLGISYIQVEKQDSTGGVWHAHHYPGCGVDTPGHLYSYTFASGNWSTFFPLQKEIDDYFNRVARDFGIESSIRYGTECLVTRYDEESLTWHSRLRLPNGTEETLVTNVVLSAVGGFTTPKWPNLSGLRNFDGPVVHTSKWDPEVALDGKRVAVIGNGASAMQVVPAIADRVGALTIFQRSRQWVAPFPKFQKPVPEPMQFLFREVPHYEWLYRLRLSWIYDSEVHEALQKDPAWPHPDRSVNAVNDRDREAYTQYIEGQLAGRPDLIAKVIPSYPPFGKRMLLDNGWYRTLLKPHVTLVDGAAARVEGRSIHAIDDETHEADLIIVASGYDTTRYLLPVEVIGRNGRTVRDVWDDDDCQAYLGTVVAGFPNFFMLYGPNTALGHRGSFIFTIESQIDYVLSVLRQMGEKRLVEVECRQDIYQHYNRKIQQMHQQMIWSHEGMSTFFRNDRGRIVTNSPWRLVDYWNLLKEADLDDYRTMPQVDSRLETSGVPREGVQRPGSRLRRRPS.

Ser-145, Glu-164, Trp-173, Asp-184, and Tyr-190 together coordinate FAD. Positions 638–662 (SRLETSGVPREGVQRPGSRLRRRPS) are disordered.

It belongs to the FAD-binding monooxygenase family. FAD serves as cofactor.

This is an uncharacterized protein from Sinorhizobium fredii (strain NBRC 101917 / NGR234).